A 337-amino-acid polypeptide reads, in one-letter code: Neurogenic differentiation factor 6 (337 aa).

The disordered stretch occupies residues 43–82; sequence LRGKSIKRAPGEETEKEEEEEDREEEDENGLPRRRGLRKK. Residues 54–71 are compositionally biased toward acidic residues; sequence EETEKEEEEEDREEEDEN. Residues 80 to 86 carry the Nuclear localization signal motif; sequence RKKKTTK. The 53-residue stretch at 94–146 folds into the bHLH domain; that stretch reads FRRQEANARERNRMHGLNDALDNLRKVVPCYSKTQKLSKIETLRLAKNYIWAL.

As to quaternary structure, efficient DNA binding requires dimerization with another bHLH protein.

The protein resides in the nucleus. Its function is as follows. Activates E box-dependent transcription in collaboration with TCF3/E47. May be a trans-acting factor involved in the development and maintenance of the mammalian nervous system. Transactivates the promoter of its own gene. This chain is Neurogenic differentiation factor 6 (NEUROD6), found in Bos taurus (Bovine).